Consider the following 97-residue polypeptide: YcgL domain-containing protein CKO_01183 (97 aa).

In terms of domain architecture, YcgL spans 1 to 85 (MFCVIYRSSK…PPEDLLKQHL (85 aa)). The segment at 74-97 (PPPPEDLLKQHLSAPGENKPDAKS) is disordered.

This chain is YcgL domain-containing protein CKO_01183, found in Citrobacter koseri (strain ATCC BAA-895 / CDC 4225-83 / SGSC4696).